The primary structure comprises 349 residues: Succinylglutamate desuccinylase (349 aa).

3 residues coordinate Zn(2+): histidine 70, glutamate 73, and histidine 166. Residue glutamate 229 is part of the active site.

It belongs to the AspA/AstE family. Succinylglutamate desuccinylase subfamily. Zn(2+) is required as a cofactor.

It carries out the reaction N-succinyl-L-glutamate + H2O = L-glutamate + succinate. The protein operates within amino-acid degradation; L-arginine degradation via AST pathway; L-glutamate and succinate from L-arginine: step 5/5. Transforms N(2)-succinylglutamate into succinate and glutamate. This Burkholderia mallei (strain ATCC 23344) protein is Succinylglutamate desuccinylase.